The sequence spans 361 residues: Probable cadicidin biosynthesis thioesterase (361 aa).

One can recognise a 4Fe-4S ferredoxin-type domain in the interval 2 to 29 (RVTVDSEQCVGAGQCVLNAPEVFDQDDD). The interval 36–110 (RADPTSGTTR…RRDSPVTTAD (75 aa)) is disordered. The segment covering 46-61 (RSARRATCARRPRSSS) has biased composition (basic residues). Composition is skewed to basic and acidic residues over residues 62–74 (RRTEPAGCADRHR) and 94–104 (TDRRQNHRRDS). S201 is a catalytic residue.

This sequence belongs to the thioesterase family.

The protein operates within antibiotic biosynthesis; candicidin biosynthesis. In terms of biological role, probable thioesterase involved in the biosynthesis of candicidin. Could release the macrolide ring from the polyketide synthase. This chain is Probable cadicidin biosynthesis thioesterase, found in Streptomyces griseus.